The chain runs to 287 residues: Phosphatidylinositol transfer protein 5 (287 aa).

A disordered region spans residues 252–287 (FHNNNNNNSNNSNNNNNNNTQPQRSSFFSRSTDGNK). Over residues 254 to 270 (NNNNNNSNNSNNNNNNN) the composition is skewed to low complexity. The span at 271–287 (TQPQRSSFFSRSTDGNK) shows a compositional bias: polar residues.

This sequence belongs to the PtdIns transfer protein family. PI transfer class IIA subfamily.

Its function is as follows. Phosphatidylinositol transfer proteins mediate the monomeric transport of lipids by shielding a lipid from the aqueous environment and binding the lipid in a hydrophobic cavity. The sequence is that of Phosphatidylinositol transfer protein 5 (pitE) from Dictyostelium discoideum (Social amoeba).